A 138-amino-acid chain; its full sequence is Acidic phospholipase A2 Drk-a1 (138 aa).

The N-terminal stretch at 1–16 (MRTLWIVAVCLIGVEG) is a signal peptide. Disulfide bonds link cysteine 42-cysteine 131, cysteine 44-cysteine 60, cysteine 59-cysteine 111, cysteine 65-cysteine 138, cysteine 66-cysteine 104, cysteine 73-cysteine 97, and cysteine 91-cysteine 102. Positions 43, 45, and 47 each coordinate Ca(2+). Histidine 63 is an active-site residue. Position 64 (aspartate 64) interacts with Ca(2+). Residue aspartate 105 is part of the active site.

Belongs to the phospholipase A2 family. Group II subfamily. D49 sub-subfamily. Ca(2+) is required as a cofactor. In terms of tissue distribution, expressed by the venom gland.

The protein resides in the secreted. It catalyses the reaction a 1,2-diacyl-sn-glycero-3-phosphocholine + H2O = a 1-acyl-sn-glycero-3-phosphocholine + a fatty acid + H(+). Snake venom phospholipase A2 (PLA2) that exhibits high hydrolytic activities and shows strong preference for the anionic micelles (dPPC with deoxycholate) to the zwitterionic micelles (dPPC with Triton X-100). PLA2 catalyzes the calcium-dependent hydrolysis of the 2-acyl groups in 3-sn-phosphoglycerides. The protein is Acidic phospholipase A2 Drk-a1 of Daboia russelii (Russel's viper).